We begin with the raw amino-acid sequence, 765 residues long: Multifunctional tryptophan biosynthesis protein (765 aa).

Positions 2–196 (ATLLIDNYDS…LSLRGGNWDE (195 aa)) constitute a Glutamine amidotransferase type-1 domain. Residue 53–55 (GPG) coordinates L-glutamine. Cys81 (nucleophile; for GATase activity) is an active-site residue. L-glutamine is bound by residues Gln85 and 131 to 132 (SL). Active-site for GATase activity residues include His170 and Glu172. The interval 231–494 (TILSRIYAQR…NLKEFVAELL (264 aa)) is indole-3-glycerol phosphate synthase. The interval 512–765 (QVKICGISSV…VEKAKSINLQ (254 aa)) is N-(5'-phosphoribosyl)anthranilate isomerase.

The enzyme catalyses N-(5-phospho-beta-D-ribosyl)anthranilate = 1-(2-carboxyphenylamino)-1-deoxy-D-ribulose 5-phosphate. It carries out the reaction 1-(2-carboxyphenylamino)-1-deoxy-D-ribulose 5-phosphate + H(+) = (1S,2R)-1-C-(indol-3-yl)glycerol 3-phosphate + CO2 + H2O. It catalyses the reaction chorismate + L-glutamine = anthranilate + pyruvate + L-glutamate + H(+). It participates in amino-acid biosynthesis; L-tryptophan biosynthesis; L-tryptophan from chorismate: step 1/5. Its pathway is amino-acid biosynthesis; L-tryptophan biosynthesis; L-tryptophan from chorismate: step 3/5. The protein operates within amino-acid biosynthesis; L-tryptophan biosynthesis; L-tryptophan from chorismate: step 4/5. Trifunctional enzyme bearing the Gln amidotransferase (GATase) domain of anthranilate synthase, indole-glycerolphosphate synthase, and phosphoribosylanthranilate isomerase activities. The sequence is that of Multifunctional tryptophan biosynthesis protein (trp1) from Phycomyces blakesleeanus.